The following is a 511-amino-acid chain: Aprataxin and PNK-like factor (511 aa).

One can recognise an FHA-like domain in the interval 1–108; the sequence is MSGGFELQPR…RILSIPSEVE (108 aa). At S116 the chain carries Phosphoserine; by ATM. S149 carries the post-translational modification Phosphoserine. Residues 182–191 carry the KBM motif; that stretch reads RKRILPTWML. Residues 223–370 are disordered; it reads KSQLNTTQQG…ATDSVLQGSE (148 aa). 2 stretches are compositionally biased toward polar residues: residues 225 to 249 and 263 to 293; these read QLNTTQQGRRQLISSGSSENTSAEQ and STISSKEMPQSFSAITLSNTEMNNIKTNAQR. Residues 304–315 are compositionally biased toward basic residues; the sequence is VSKHKIATKRTP. The segment covering 324 to 344 has biased composition (polar residues); sequence CSENCSSAQGDSLQDESQGSH. The span at 345 to 355 shows a compositional bias: low complexity; that stretch reads SESSSNPSNPE. The a glycoprotein site is built by R376, Y381, Y386, and R387. The segment at 377-398 adopts a PBZ-type 1 zinc-finger fold; that stretch reads TSCMYGANCYRKNPVHFQHFSH. A flexible linker region spans residues 406–416; sequence GVQIVGQDETD. Residues 419–440 form a PBZ-type 2 zinc finger; the sequence is PECPYGPSCYRKNPQHKIEYRH. Residues Y423, Y428, and R429 each coordinate a glycoprotein. Residues 449–497 are disordered; the sequence is LDEDNDNVGQPNEYDLNDSFLDDEEEDYEPTDEDSDWEPGKEDEEKEDV. Residues 468–497 show a composition bias toward acidic residues; that stretch reads FLDDEEEDYEPTDEDSDWEPGKEDEEKEDV. Residues 476–500 carry the NAP1L motif motif; that stretch reads YEPTDEDSDWEPGKEDEEKEDVEEL. Positions 487–511 form a coiled coil; that stretch reads PGKEDEEKEDVEELLKEAKRFMKRK.

Belongs to the APLF family. In terms of assembly, interacts with LIG4. Interacts with PARP1. Interacts with XRCC4. Interacts (via KBM motif) with XRCC5 and XRCC6; promoting recruitment to DNA damage sites. Interacts with XRCC1. Interacts (via C-terminal disordered region) with histones; interacts with histone H2A, H2B and H3-H4. Poly-ADP-ribosylated. In addition to binding non covalently poly-ADP-ribose via its PBZ-type zinc fingers, the protein is also covalently poly-ADP-ribosylated by PARP1. Post-translationally, phosphorylated in an ATM-dependent manner upon double-strand DNA break.

Its subcellular location is the nucleus. The protein localises to the chromosome. It is found in the cytoplasm. The protein resides in the cytosol. Functionally, histone chaperone involved in single-strand and double-strand DNA break repair. Recruited to sites of DNA damage through interaction with branched poly-ADP-ribose chains, a polymeric post-translational modification synthesized transiently at sites of chromosomal damage to accelerate DNA strand break repair reactions. Following recruitment to DNA damage sites, acts as a histone chaperone that mediates histone eviction during DNA repair and promotes recruitment of histone variant MACROH2A1. Also has a nuclease activity: displays apurinic-apyrimidinic (AP) endonuclease and 3'-5' exonuclease activities in vitro. Also able to introduce nicks at hydroxyuracil and other types of pyrimidine base damage. Together with PARP3, promotes the retention of the LIG4-XRCC4 complex on chromatin and accelerate DNA ligation during non-homologous end-joining (NHEJ). Also acts as a negative regulator of cell pluripotency by promoting histone exchange. Required for the embryo implantation during the epithelial to mesenchymal transition in females. The sequence is that of Aprataxin and PNK-like factor from Homo sapiens (Human).